We begin with the raw amino-acid sequence, 294 residues long: MRPSLDSYAHLAGGKVRDLYTIDDEHLLLVASDRISAYDHVLSTPIPDKGRVLTAMSVFFFGVLGGNNHLAGEPDDSRIPEEVLGRALVVRKLDMVPVECVARGYLTGSGLLDYNETGAVCGVALPEGLVEASQLPDPIFTPASKAELGEHDENISFEAVVEKVGQDLAVKLRDDTLDIYGRASNFAADRGIILADTKLEFGLDPQGNLVLADEVLTPDSSRYWPADGYEAGKVQPSFDKQFVRNWLTGPESGWDRASDTPPPPLPAEIVEATRERYIEAYERISGLSFADWVG.

It belongs to the SAICAR synthetase family.

It carries out the reaction 5-amino-1-(5-phospho-D-ribosyl)imidazole-4-carboxylate + L-aspartate + ATP = (2S)-2-[5-amino-1-(5-phospho-beta-D-ribosyl)imidazole-4-carboxamido]succinate + ADP + phosphate + 2 H(+). The protein operates within purine metabolism; IMP biosynthesis via de novo pathway; 5-amino-1-(5-phospho-D-ribosyl)imidazole-4-carboxamide from 5-amino-1-(5-phospho-D-ribosyl)imidazole-4-carboxylate: step 1/2. The sequence is that of Phosphoribosylaminoimidazole-succinocarboxamide synthase from Rhodococcus jostii (strain RHA1).